The following is a 317-amino-acid chain: Ribosomal protein L11 methyltransferase (317 aa).

Residues T158, G179, D201, and N244 each contribute to the S-adenosyl-L-methionine site.

The protein belongs to the methyltransferase superfamily. PrmA family.

Its subcellular location is the cytoplasm. It carries out the reaction L-lysyl-[protein] + 3 S-adenosyl-L-methionine = N(6),N(6),N(6)-trimethyl-L-lysyl-[protein] + 3 S-adenosyl-L-homocysteine + 3 H(+). Methylates ribosomal protein L11. This Streptococcus pyogenes serotype M49 (strain NZ131) protein is Ribosomal protein L11 methyltransferase.